The chain runs to 583 residues: Long-chain-fatty-acid--AMP ligase FadD26 (583 aa).

This sequence belongs to the ATP-dependent AMP-binding enzyme family.

It carries out the reaction holo-[(phenol)carboxyphthiodiolenone synthase] + a long-chain fatty acid + ATP = a long-chain fatty acyl-[(phenol)carboxyphthiodiolenone synthase] + AMP + diphosphate. The enzyme catalyses eicosanoate + holo-[(phenol)carboxyphthiodiolenone synthase] + ATP = icosanoyl-[(phenol)carboxyphthiodiolenone synthase] + AMP + diphosphate. It catalyses the reaction holo-[(phenol)carboxyphthiodiolenone synthase] + docosanoate + ATP = docosanoyl-[(phenol)carboxyphthiodiolenone synthase] + AMP + diphosphate. It functions in the pathway lipid metabolism; fatty acid biosynthesis. Its function is as follows. Catalyzes the activation of long-chain fatty acids as acyl-adenylates (acyl-AMP), which are then transferred to the multifunctional polyketide synthase PpsA for further chain extension. Catalyzes the adenylation of the long-chain fatty acids eicosanoate (C20) or docosanoate (C22), and potentially the very-long-chain fatty acid lignocerate (C24). Involved in the biosynthesis of phthiocerol dimycocerosate (DIM A) and phthiodiolone dimycocerosate (DIM B). In Mycobacterium tuberculosis (strain CDC 1551 / Oshkosh), this protein is Long-chain-fatty-acid--AMP ligase FadD26 (fadD26).